Consider the following 248-residue polypeptide: Proteasome subunit alpha (248 aa).

This sequence belongs to the peptidase T1A family. As to quaternary structure, the 20S proteasome core is composed of 14 alpha and 14 beta subunits that assemble into four stacked heptameric rings, resulting in a barrel-shaped structure. The two inner rings, each composed of seven catalytic beta subunits, are sandwiched by two outer rings, each composed of seven alpha subunits. The catalytic chamber with the active sites is on the inside of the barrel. Has a gated structure, the ends of the cylinder being occluded by the N-termini of the alpha-subunits. Is capped by the proteasome-associated ATPase, ARC.

It is found in the cytoplasm. It participates in protein degradation; proteasomal Pup-dependent pathway. With respect to regulation, the formation of the proteasomal ATPase ARC-20S proteasome complex, likely via the docking of the C-termini of ARC into the intersubunit pockets in the alpha-rings, may trigger opening of the gate for substrate entry. Interconversion between the open-gate and close-gate conformations leads to a dynamic regulation of the 20S proteasome proteolysis activity. Component of the proteasome core, a large protease complex with broad specificity involved in protein degradation. This Mycobacterium bovis (strain BCG / Pasteur 1173P2) protein is Proteasome subunit alpha.